Here is a 151-residue protein sequence, read N- to C-terminus: uncharacterized protein (151 aa).

The next 3 membrane-spanning stretches (helical) occupy residues 12–32 (LAYFIDGIIVSVPSYIILFII), 59–79 (LAFLPTMLIMIVISVLYYGLL), and 114–134 (YFAYILSGIIFYIGFIMIAFG).

It localises to the cell membrane. This is an uncharacterized protein from Bacillus subtilis (strain 168).